The sequence spans 344 residues: NADH-quinone oxidoreductase subunit H 2 (344 aa).

8 helical membrane-spanning segments follow: residues 13–33 (LPIL…VAWL), 82–102 (ILFL…WAVI), 116–136 (ALLY…LAGW), 161–181 (MGFA…GEIV), 188–208 (FWHW…ISGV), 240–260 (LFFL…ALMF), 280–300 (VPGI…YLWF), and 319–339 (VFIP…VAQL).

The protein belongs to the complex I subunit 1 family. As to quaternary structure, NDH-1 is composed of 14 different subunits. Subunits NuoA, H, J, K, L, M, N constitute the membrane sector of the complex.

The protein localises to the cell inner membrane. The enzyme catalyses a quinone + NADH + 5 H(+)(in) = a quinol + NAD(+) + 4 H(+)(out). Functionally, NDH-1 shuttles electrons from NADH, via FMN and iron-sulfur (Fe-S) centers, to quinones in the respiratory chain. The immediate electron acceptor for the enzyme in this species is believed to be ubiquinone. Couples the redox reaction to proton translocation (for every two electrons transferred, four hydrogen ions are translocated across the cytoplasmic membrane), and thus conserves the redox energy in a proton gradient. This subunit may bind ubiquinone. This Nitrosococcus oceani (strain ATCC 19707 / BCRC 17464 / JCM 30415 / NCIMB 11848 / C-107) protein is NADH-quinone oxidoreductase subunit H 2.